Reading from the N-terminus, the 101-residue chain is uncharacterized protein (101 aa).

The next 3 helical transmembrane spans lie at 20-40 (KHFILITACPLFVLGLLLLGL), 59-79 (GVIAAKLLVAWYLATIVMYIA), and 81-101 (SEMWKYAFAVSLLLNSLALFF).

It localises to the endoplasmic reticulum. Its subcellular location is the membrane. This is an uncharacterized protein from Saccharomyces cerevisiae (strain ATCC 204508 / S288c) (Baker's yeast).